Here is a 319-residue protein sequence, read N- to C-terminus: Lipoyl synthase (319 aa).

A disordered region spans residues 6–29 (DTVSANPVRPRHPEKAARPDALSP). A compositionally biased stretch (basic and acidic residues) spans 16 to 29 (RHPEKAARPDALSP). [4Fe-4S] cluster-binding residues include Cys61, Cys66, Cys72, Cys87, Cys91, Cys94, and Ser300. Residues 73 to 289 (WDKKHATFMI…QTTAYAKGFL (217 aa)) form the Radical SAM core domain.

This sequence belongs to the radical SAM superfamily. Lipoyl synthase family. [4Fe-4S] cluster is required as a cofactor.

It localises to the cytoplasm. It carries out the reaction [[Fe-S] cluster scaffold protein carrying a second [4Fe-4S](2+) cluster] + N(6)-octanoyl-L-lysyl-[protein] + 2 oxidized [2Fe-2S]-[ferredoxin] + 2 S-adenosyl-L-methionine + 4 H(+) = [[Fe-S] cluster scaffold protein] + N(6)-[(R)-dihydrolipoyl]-L-lysyl-[protein] + 4 Fe(3+) + 2 hydrogen sulfide + 2 5'-deoxyadenosine + 2 L-methionine + 2 reduced [2Fe-2S]-[ferredoxin]. The protein operates within protein modification; protein lipoylation via endogenous pathway; protein N(6)-(lipoyl)lysine from octanoyl-[acyl-carrier-protein]: step 2/2. Its function is as follows. Catalyzes the radical-mediated insertion of two sulfur atoms into the C-6 and C-8 positions of the octanoyl moiety bound to the lipoyl domains of lipoate-dependent enzymes, thereby converting the octanoylated domains into lipoylated derivatives. The sequence is that of Lipoyl synthase from Rhodopseudomonas palustris (strain ATCC BAA-98 / CGA009).